The primary structure comprises 216 residues: Transmembrane emp24 domain-containing protein eca (216 aa).

Positions 1–20 are cleaved as a signal peptide; sequence MRDQFISLALILCVLHSACG. Topologically, residues 21–182 are lumenal; that stretch reads LYFHISETER…FRHTSESTNS (162 aa). The GOLD domain occupies 30 to 126; sequence RKCFIEEVPD…QLRVHLDIQV (97 aa). Positions 134–164 form a coiled coil; sequence ANVAQKEKLTELQLRIRQLLDQVEQITKEQN. Residues 183-203 traverse the membrane as a helical segment; that stretch reads RVLWWSLAQTVVLVCMGFWQM. The Cytoplasmic segment spans residues 204 to 216; sequence RHLKSFFEAKKLV. Residues 213-216 carry the Prevents secretion from ER motif; sequence KKLV.

This sequence belongs to the EMP24/GP25L family.

It is found in the endoplasmic reticulum membrane. Functionally, eca and bai are essential, though not redundant, for dorsoventral patterning of the embryo. Specifically required during early embryogenesis for the activity of maternal tkv, while the zygotic tkv is not affected. Involved in Golgi organization. The sequence is that of Transmembrane emp24 domain-containing protein eca from Drosophila simulans (Fruit fly).